Consider the following 184-residue polypeptide: NADH-quinone oxidoreductase subunit B (184 aa).

Residues Cys-63, Cys-64, Cys-128, and Cys-158 each coordinate [4Fe-4S] cluster.

It belongs to the complex I 20 kDa subunit family. In terms of assembly, NDH-1 is composed of 14 different subunits. Subunits NuoB, C, D, E, F, and G constitute the peripheral sector of the complex. The cofactor is [4Fe-4S] cluster.

The protein localises to the cell inner membrane. It carries out the reaction a quinone + NADH + 5 H(+)(in) = a quinol + NAD(+) + 4 H(+)(out). In terms of biological role, NDH-1 shuttles electrons from NADH, via FMN and iron-sulfur (Fe-S) centers, to quinones in the respiratory chain. The immediate electron acceptor for the enzyme in this species is believed to be ubiquinone. Couples the redox reaction to proton translocation (for every two electrons transferred, four hydrogen ions are translocated across the cytoplasmic membrane), and thus conserves the redox energy in a proton gradient. The polypeptide is NADH-quinone oxidoreductase subunit B (Xylella fastidiosa (strain M23)).